Reading from the N-terminus, the 183-residue chain is Ribulose bisphosphate carboxylase small subunit, chloroplastic (183 aa).

Residues 1–58 (MASSMLSTAAVACINRASPAQASMVAPFTGLKSTSAFPTTRKTTTDITSIASNGGRVQ) constitute a chloroplast transit peptide.

Belongs to the RuBisCO small chain family. In terms of assembly, heterohexadecamer of 8 large and 8 small subunits.

It localises to the plastid. Its subcellular location is the chloroplast. In terms of biological role, ruBisCO catalyzes two reactions: the carboxylation of D-ribulose 1,5-bisphosphate, the primary event in carbon dioxide fixation, as well as the oxidative fragmentation of the pentose substrate. Both reactions occur simultaneously and in competition at the same active site. Although the small subunit is not catalytic it is essential for maximal activity. In Hevea brasiliensis (Para rubber tree), this protein is Ribulose bisphosphate carboxylase small subunit, chloroplastic.